Reading from the N-terminus, the 449-residue chain is Asparagine--tRNA ligase (449 aa).

The protein belongs to the class-II aminoacyl-tRNA synthetase family. Homodimer.

The protein resides in the cytoplasm. It carries out the reaction tRNA(Asn) + L-asparagine + ATP = L-asparaginyl-tRNA(Asn) + AMP + diphosphate + H(+). This chain is Asparagine--tRNA ligase, found in Mesomycoplasma hyopneumoniae (strain 7448) (Mycoplasma hyopneumoniae).